The chain runs to 204 residues: Octanoyltransferase (204 aa).

The BPL/LPL catalytic domain maps to 30-204; it reads CETPDEIWLL…QSFINQLTDV (175 aa). Substrate-binding positions include 69–76, 136–138, and 149–151; these read RGGQITYH, SLG, and GIA. Cys-167 acts as the Acyl-thioester intermediate in catalysis.

Belongs to the LipB family.

It localises to the cytoplasm. It catalyses the reaction octanoyl-[ACP] + L-lysyl-[protein] = N(6)-octanoyl-L-lysyl-[protein] + holo-[ACP] + H(+). Its pathway is protein modification; protein lipoylation via endogenous pathway; protein N(6)-(lipoyl)lysine from octanoyl-[acyl-carrier-protein]: step 1/2. Functionally, catalyzes the transfer of endogenously produced octanoic acid from octanoyl-acyl-carrier-protein onto the lipoyl domains of lipoate-dependent enzymes. Lipoyl-ACP can also act as a substrate although octanoyl-ACP is likely to be the physiological substrate. In Nitrosomonas europaea (strain ATCC 19718 / CIP 103999 / KCTC 2705 / NBRC 14298), this protein is Octanoyltransferase.